We begin with the raw amino-acid sequence, 416 residues long: Serine hydroxymethyltransferase (416 aa).

(6S)-5,6,7,8-tetrahydrofolate-binding positions include leucine 118 and 122–124 (GHL). An N6-(pyridoxal phosphate)lysine modification is found at lysine 226. 350 to 352 (SPF) is a (6S)-5,6,7,8-tetrahydrofolate binding site.

The protein belongs to the SHMT family. As to quaternary structure, homodimer. The cofactor is pyridoxal 5'-phosphate.

The protein resides in the cytoplasm. The catalysed reaction is (6R)-5,10-methylene-5,6,7,8-tetrahydrofolate + glycine + H2O = (6S)-5,6,7,8-tetrahydrofolate + L-serine. The protein operates within one-carbon metabolism; tetrahydrofolate interconversion. It participates in amino-acid biosynthesis; glycine biosynthesis; glycine from L-serine: step 1/1. In terms of biological role, catalyzes the reversible interconversion of serine and glycine with tetrahydrofolate (THF) serving as the one-carbon carrier. This reaction serves as the major source of one-carbon groups required for the biosynthesis of purines, thymidylate, methionine, and other important biomolecules. Also exhibits THF-independent aldolase activity toward beta-hydroxyamino acids, producing glycine and aldehydes, via a retro-aldol mechanism. In Sulfurovum sp. (strain NBC37-1), this protein is Serine hydroxymethyltransferase.